The chain runs to 237 residues: MAPVDIPDRDRLIVALDLPDLRVAEAMVDRLGDSVGFYKIGYQLAYAGGLPLARALVGAGKKVFVDLKLHDIGNTVARGVESLSHLGASFLTVHAYPQTMKAAVEARGSSKVKILAVTVLTSYDDRDLADAGYRFGVRDLVEARARQAQAIGVDGLVCSPEEAAHLRSIVGPEMDLVTPGIRPAGAAAGDQKRIMTPAKAIAAGASYLVVGRPVLDAPDPKAAADAIVAEIAAARGS.

Residues Asp-17, Lys-39, 66 to 75, Thr-121, Arg-182, Gln-191, Gly-211, and Arg-212 contribute to the substrate site; that span reads DLKLHDIGNT. Lys-68 serves as the catalytic Proton donor.

It belongs to the OMP decarboxylase family. Type 1 subfamily. As to quaternary structure, homodimer.

The catalysed reaction is orotidine 5'-phosphate + H(+) = UMP + CO2. The protein operates within pyrimidine metabolism; UMP biosynthesis via de novo pathway; UMP from orotate: step 2/2. Functionally, catalyzes the decarboxylation of orotidine 5'-monophosphate (OMP) to uridine 5'-monophosphate (UMP). This chain is Orotidine 5'-phosphate decarboxylase, found in Rhodopseudomonas palustris (strain ATCC BAA-98 / CGA009).